We begin with the raw amino-acid sequence, 228 residues long: Urease accessory protein UreF (228 aa).

The protein belongs to the UreF family. In terms of assembly, ureD, UreF and UreG form a complex that acts as a GTP-hydrolysis-dependent molecular chaperone, activating the urease apoprotein by helping to assemble the nickel containing metallocenter of UreC. The UreE protein probably delivers the nickel.

It localises to the cytoplasm. Functionally, required for maturation of urease via the functional incorporation of the urease nickel metallocenter. The polypeptide is Urease accessory protein UreF (Lachnoclostridium phytofermentans (strain ATCC 700394 / DSM 18823 / ISDg) (Clostridium phytofermentans)).